A 227-amino-acid polypeptide reads, in one-letter code: Cytochrome c oxidase subunit 2 (227 aa).

The Mitochondrial intermembrane segment spans residues 1–14 (MAYPLQMGLQDATS). Residues 15-45 (PIMEELLHFHDHTLMIVFLISSLVLYIISLM) traverse the membrane as a helical segment. At 46 to 59 (LTTKLTHTSTMDAQ) the chain is on the mitochondrial matrix side. A helical transmembrane segment spans residues 60 to 87 (EVETVWTILPAIILILIALPSLRILYMM). Topologically, residues 88–227 (DEINNPSLTV…HFEKWSTSML (140 aa)) are mitochondrial intermembrane. Positions 161, 196, 198, 200, 204, and 207 each coordinate Cu cation. Residue Glu198 participates in Mg(2+) binding.

Belongs to the cytochrome c oxidase subunit 2 family. Component of the cytochrome c oxidase (complex IV, CIV), a multisubunit enzyme composed of 14 subunits. The complex is composed of a catalytic core of 3 subunits MT-CO1, MT-CO2 and MT-CO3, encoded in the mitochondrial DNA, and 11 supernumerary subunits COX4I, COX5A, COX5B, COX6A, COX6B, COX6C, COX7A, COX7B, COX7C, COX8 and NDUFA4, which are encoded in the nuclear genome. The complex exists as a monomer or a dimer and forms supercomplexes (SCs) in the inner mitochondrial membrane with NADH-ubiquinone oxidoreductase (complex I, CI) and ubiquinol-cytochrome c oxidoreductase (cytochrome b-c1 complex, complex III, CIII), resulting in different assemblies (supercomplex SCI(1)III(2)IV(1) and megacomplex MCI(2)III(2)IV(2)). Found in a complex with TMEM177, COA6, COX18, COX20, SCO1 and SCO2. Interacts with TMEM177 in a COX20-dependent manner. Interacts with COX20. Interacts with COX16. The cofactor is Cu cation.

The protein resides in the mitochondrion inner membrane. It catalyses the reaction 4 Fe(II)-[cytochrome c] + O2 + 8 H(+)(in) = 4 Fe(III)-[cytochrome c] + 2 H2O + 4 H(+)(out). In terms of biological role, component of the cytochrome c oxidase, the last enzyme in the mitochondrial electron transport chain which drives oxidative phosphorylation. The respiratory chain contains 3 multisubunit complexes succinate dehydrogenase (complex II, CII), ubiquinol-cytochrome c oxidoreductase (cytochrome b-c1 complex, complex III, CIII) and cytochrome c oxidase (complex IV, CIV), that cooperate to transfer electrons derived from NADH and succinate to molecular oxygen, creating an electrochemical gradient over the inner membrane that drives transmembrane transport and the ATP synthase. Cytochrome c oxidase is the component of the respiratory chain that catalyzes the reduction of oxygen to water. Electrons originating from reduced cytochrome c in the intermembrane space (IMS) are transferred via the dinuclear copper A center (CU(A)) of subunit 2 and heme A of subunit 1 to the active site in subunit 1, a binuclear center (BNC) formed by heme A3 and copper B (CU(B)). The BNC reduces molecular oxygen to 2 water molecules using 4 electrons from cytochrome c in the IMS and 4 protons from the mitochondrial matrix. The polypeptide is Cytochrome c oxidase subunit 2 (MT-CO2) (Halichoerus grypus (Gray seal)).